The following is a 1206-amino-acid chain: STE20-like serine/threonine-protein kinase (1206 aa).

A Phosphoserine modification is found at serine 14. The Protein kinase domain maps to 34–292 (WEIIGELGDG…TSQLLQHPFV (259 aa)). ATP is bound by residues 40 to 48 (LGDGAFGKV) and lysine 63. The active-site Proton acceptor is aspartate 155. Threonine 183 is modified (phosphothreonine). Residue serine 189 is modified to Phosphoserine. A disordered region spans residues 308–352 (KAEVTEEVEDGKEEDDDDETESALPIPANKRASSDLSIASSEEDK). Residues 312–328 (TEEVEDGKEEDDDDETE) are compositionally biased toward acidic residues. Phosphoserine is present on residues serine 340, serine 341, serine 344, serine 347, serine 348, serine 354, and serine 372. The interval 364–440 (SERTEHNTSG…ESQPDTEDQQ (77 aa)) is disordered. 2 stretches are compositionally biased toward basic and acidic residues: residues 381-395 (LSEK…KTVD) and 420-429 (ENGREKKRPQ). The stretch at 468–492 (EEDRNEENQEIIENKLTQSEEIKDI) forms a coiled coil. Disordered regions lie at residues 515-761 (DNEV…SSSD) and 773-792 (TKDS…KTLK). Over residues 520 to 536 (FTKEETQEKLGKDDKTH) the composition is skewed to basic and acidic residues. Residues serine 545 and serine 563 each carry the phosphoserine modification. Residues 556 to 565 (TQKSAEQSQD) show a composition bias toward polar residues. The span at 584 to 609 (KATEGPEAHGAEEEPRSGERVEDKQL) shows a compositional bias: basic and acidic residues. Residues 634 to 643 (EEPETDEVDQ) are compositionally biased toward acidic residues. A phosphoserine mark is found at serine 645, serine 649, and serine 668. Over residues 691–702 (AEPQAPAASQAS) the composition is skewed to low complexity. Residues 747–757 (TDSGTGSTVEN) are compositionally biased toward polar residues. A phosphoserine mark is found at serine 776 and serine 778. At threonine 813 the chain carries Phosphothreonine. Serine 817 carries the phosphoserine modification. The stretch at 825–1037 (LRRQELRELR…LKNRQTQERA (213 aa)) forms a coiled coil. One can recognise a UVR domain in the interval 874 to 909 (DQEIENLEKQQKQTIERLEQEHTNRLRDEAKRIKGE). Threonine 1065 is modified (phosphothreonine). A coiled-coil region spans residues 1077-1151 (AAQEEKRQKN…ELKEWREKLR (75 aa)). Residues 1079–1099 (QEEKRQKNERMAQHQKHESQM) show a composition bias toward basic and acidic residues. Disordered stretches follow at residues 1079-1100 (QEEK…SQMR) and 1181-1206 (LNPS…AWAG). Polar residues predominate over residues 1181-1200 (LNPSAQSRGCLQTSHPSSTR).

The protein belongs to the protein kinase superfamily. STE Ser/Thr protein kinase family. STE20 subfamily. In terms of processing, proteolytically cleaved by caspase-3. Autophosphorylated.

Its subcellular location is the cytoplasm. The enzyme catalyses L-seryl-[protein] + ATP = O-phospho-L-seryl-[protein] + ADP + H(+). It carries out the reaction L-threonyl-[protein] + ATP = O-phospho-L-threonyl-[protein] + ADP + H(+). Functionally, mediates apoptosis and actin stress fiber dissolution. The polypeptide is STE20-like serine/threonine-protein kinase (Slk) (Rattus norvegicus (Rat)).